The sequence spans 588 residues: Probable catabolite repression protein creC (588 aa).

4 WD repeats span residues 249-289 (VCNS…ALFT), 323-364 (LANQ…DIFR), 365-404 (SYYG…IVAR), and 407-451 (GHNS…LHRP). Residues 452 to 499 (RAHQASTRQRTSMITSNSQHASRHRADSAGNRARSDSQRTADGYDEYD) are disordered. Polar residues predominate over residues 455–471 (QASTRQRTSMITSNSQH). One copy of the WD 5 repeat lies at 523-560 (IGSDPICWLGFQEDSIMTSSLEGHIRTWDRPREGINDT). Positions 569–588 (AISAGAGSGSAVANSARGSL) are disordered.

It belongs to the WD repeat creC family. Interacts with creB.

Functionally, component of the regulatory network controlling carbon source utilization through ubiquitination and deubiquitination involving creA, creB, creC, creD and acrB. Required to prevent the proteolysis of the CreB deubiquitinating enzyme in the absence of carbon catabolite repression. CreB deubiquitinating enzyme stabilized in a complex with the CreC leads to the expression of genes such as those in the proline and quinate pathways. This chain is Probable catabolite repression protein creC (creC), found in Aspergillus terreus (strain NIH 2624 / FGSC A1156).